A 281-amino-acid polypeptide reads, in one-letter code: Protein EMBRYO DEFECTIVE 1674 (281 aa).

Polar residues-rich tracts occupy residues 1-14 (MTTT…QSLS) and 24-41 (PNTS…PNSS). Residues 1 to 47 (MTTTRAKSKFQSLSACRFTPLPEPNTSPSTYSKTLPKPNSSPGTDGT) form a disordered region. The SANTA domain maps to 66 to 153 (VTLSDWWLTK…LGFPYDWEDY (88 aa)).

Its function is as follows. Required for normal embryo development. This chain is Protein EMBRYO DEFECTIVE 1674, found in Arabidopsis thaliana (Mouse-ear cress).